We begin with the raw amino-acid sequence, 174 residues long: Adenine phosphoribosyltransferase (174 aa).

The protein belongs to the purine/pyrimidine phosphoribosyltransferase family. Homodimer.

The protein localises to the cytoplasm. It carries out the reaction AMP + diphosphate = 5-phospho-alpha-D-ribose 1-diphosphate + adenine. Its pathway is purine metabolism; AMP biosynthesis via salvage pathway; AMP from adenine: step 1/1. Catalyzes a salvage reaction resulting in the formation of AMP, that is energically less costly than de novo synthesis. The sequence is that of Adenine phosphoribosyltransferase from Mycobacterium sp. (strain JLS).